The chain runs to 358 residues: Protein phosphatase 1 regulatory subunit 3G (358 aa).

Residues 1–71 (MEPIGARLSL…KEEAAPQEQE (71 aa)) are disordered. Over residues 11 to 29 (EAPGPAPFREAPPAEELPA) the composition is skewed to low complexity. At Ser-86 the chain carries Phosphoserine. The 141-residue stretch at 210 to 350 (AERLQRQRVC…NNAGANYTLR (141 aa)) folds into the CBM21 domain. Residues 270 to 280 (EPLEPQQPEAP) are compositionally biased toward low complexity. Residues 270-295 (EPLEPQQPEAPSGASEPGSGDAKKEP) are disordered.

Its function is as follows. Glycogen-targeting subunit for protein phosphatase 1 (PP1). Involved in the regulation of hepatic glycogenesis in a manner coupled to the fasting-feeding cycle and distinct from other glycogen-targeting subunits. This is Protein phosphatase 1 regulatory subunit 3G (PPP1R3G) from Homo sapiens (Human).